The primary structure comprises 425 residues: Calreticulin-1 (425 aa).

The signal sequence occupies residues 1-22 (MAKLNPKFISLILFALVVIVSA). An N-linked (GlcNAc...) asparagine glycan is attached at asparagine 59. A disulfide bridge links cysteine 108 with cysteine 140. Positions 112, 114, 131, and 138 each coordinate an alpha-D-glucoside. Asparagine 154 carries N-linked (GlcNAc...) asparagine glycosylation. 7 tandem repeats follow at residues 194–205 (KQTGSLYSDWDL), 213–224 (DPSAKKPEDWDD), 230–241 (DPEDTKPAGYDD), 248–259 (DTDAKKPEDWDD), 263–273 (GEWTAPTIPNP), 277–287 (GEWKPKKIKNP), and 291–301 (GKWKAPMIDNP). The interval 194 to 259 (KQTGSLYSDW…DAKKPEDWDD (66 aa)) is 4 X approximate repeats. Basic and acidic residues-rich tracts occupy residues 213–235 (DPSA…EDTK) and 241–255 (DIPK…KKPE). Positions 213-281 (DPSAKKPEDW…NPEYNGEWKP (69 aa)) are disordered. Residues 263 to 301 (GEWTAPTIPNPEYNGEWKPKKIKNPAYKGKWKAPMIDNP) form a 3 X approximate repeats region. Glutamate 321 serves as a coordination point for an alpha-D-glucoside. Residues 348–378 (EETWGKHKDAEKAAFDEAEKKREEEESKDAP) show a composition bias toward basic and acidic residues. The disordered stretch occupies residues 348–425 (EETWGKHKDA…EETDAAHDEL (78 aa)). The segment covering 379-398 (AESDAEEEAEDDDNEGDDSD) has biased composition (acidic residues). Residues serine 381 and serine 397 each carry the phosphoserine modification. N-linked (GlcNAc...) asparagine glycosylation occurs at asparagine 399. Basic and acidic residues predominate over residues 399–412 (NESKSEETKEAEET). Positions 422–425 (HDEL) match the Prevents secretion from ER motif.

The protein belongs to the calreticulin family.

Its subcellular location is the endoplasmic reticulum lumen. Functionally, molecular calcium-binding chaperone promoting folding, oligomeric assembly and quality control in the ER via the calreticulin/calnexin cycle. This lectin may interact transiently with almost all of the monoglucosylated glycoproteins that are synthesized in the ER. This Arabidopsis thaliana (Mouse-ear cress) protein is Calreticulin-1 (CRT1).